Reading from the N-terminus, the 227-residue chain is Cytochrome c oxidase subunit 2 (227 aa).

Residues 1–14 are Mitochondrial intermembrane-facing; it reads MAYPMQLGFQDATS. The chain crosses the membrane as a helical span at residues 15–45; the sequence is PIMEELLHFHDHTLMIVLLISSLVLYIISLM. Over 46–59 the chain is Mitochondrial matrix; that stretch reads LTTKLTHTSTMDAQ. A helical transmembrane segment spans residues 60–87; that stretch reads EVETIWTILPAIILILIALPSLRILYMM. At 88–227 the chain is on the mitochondrial intermembrane side; sequence DEINNPSLTV…YFEKWSASML (140 aa). The Cu cation site is built by histidine 161, cysteine 196, glutamate 198, cysteine 200, histidine 204, and methionine 207. Residue glutamate 198 coordinates Mg(2+). Phosphotyrosine is present on tyrosine 218.

Belongs to the cytochrome c oxidase subunit 2 family. Component of the cytochrome c oxidase (complex IV, CIV), a multisubunit enzyme composed of 14 subunits. The complex is composed of a catalytic core of 3 subunits MT-CO1, MT-CO2 and MT-CO3, encoded in the mitochondrial DNA, and 11 supernumerary subunits COX4I, COX5A, COX5B, COX6A, COX6B, COX6C, COX7A, COX7B, COX7C, COX8 and NDUFA4, which are encoded in the nuclear genome. The complex exists as a monomer or a dimer and forms supercomplexes (SCs) in the inner mitochondrial membrane with NADH-ubiquinone oxidoreductase (complex I, CI) and ubiquinol-cytochrome c oxidoreductase (cytochrome b-c1 complex, complex III, CIII), resulting in different assemblies (supercomplex SCI(1)III(2)IV(1) and megacomplex MCI(2)III(2)IV(2)). Found in a complex with TMEM177, COA6, COX18, COX20, SCO1 and SCO2. Interacts with TMEM177 in a COX20-dependent manner. Interacts with COX20. Interacts with COX16. The cofactor is Cu cation.

It is found in the mitochondrion inner membrane. It catalyses the reaction 4 Fe(II)-[cytochrome c] + O2 + 8 H(+)(in) = 4 Fe(III)-[cytochrome c] + 2 H2O + 4 H(+)(out). Functionally, component of the cytochrome c oxidase, the last enzyme in the mitochondrial electron transport chain which drives oxidative phosphorylation. The respiratory chain contains 3 multisubunit complexes succinate dehydrogenase (complex II, CII), ubiquinol-cytochrome c oxidoreductase (cytochrome b-c1 complex, complex III, CIII) and cytochrome c oxidase (complex IV, CIV), that cooperate to transfer electrons derived from NADH and succinate to molecular oxygen, creating an electrochemical gradient over the inner membrane that drives transmembrane transport and the ATP synthase. Cytochrome c oxidase is the component of the respiratory chain that catalyzes the reduction of oxygen to water. Electrons originating from reduced cytochrome c in the intermembrane space (IMS) are transferred via the dinuclear copper A center (CU(A)) of subunit 2 and heme A of subunit 1 to the active site in subunit 1, a binuclear center (BNC) formed by heme A3 and copper B (CU(B)). The BNC reduces molecular oxygen to 2 water molecules using 4 electrons from cytochrome c in the IMS and 4 protons from the mitochondrial matrix. The sequence is that of Cytochrome c oxidase subunit 2 (MT-CO2) from Bubalus depressicornis (Lowland anoa).